Reading from the N-terminus, the 357-residue chain is Peptide chain release factor 1 (357 aa).

An N5-methylglutamine modification is found at glutamine 232. Basic and acidic residues predominate over residues 282–291; it reads KQRAEQEAAR. A disordered region spans residues 282–302; the sequence is KQRAEQEAARRSQVGTGDRSE.

The protein belongs to the prokaryotic/mitochondrial release factor family. Methylated by PrmC. Methylation increases the termination efficiency of RF1.

It is found in the cytoplasm. In terms of biological role, peptide chain release factor 1 directs the termination of translation in response to the peptide chain termination codons UAG and UAA. The sequence is that of Peptide chain release factor 1 from Solidesulfovibrio magneticus (strain ATCC 700980 / DSM 13731 / RS-1) (Desulfovibrio magneticus).